Reading from the N-terminus, the 261-residue chain is Calbindin (261 aa).

Ala-2 is subject to N-acetylalanine. The tract at residues 2-7 (AESHLQ) is interaction with RANBP9. 5 consecutive EF-hand domains span residues 11 to 46 (ITAS…LQQA), 53 to 88 (ELSP…EENF), 98 to 133 (KSCE…LLEK), 142 to 177 (KLAE…QENF), and 186 to 221 (MCGK…LCEK). Residues Asp-24, Asp-26, Ser-28, Tyr-30, and Glu-35 each coordinate Ca(2+). Residues Asp-111, Asp-113, Ser-115, Glu-122, Asp-155, Asn-157, Asp-159, Lys-161, Glu-166, Asp-199, Asp-201, Asn-203, Tyr-205, and Glu-210 each coordinate Ca(2+).

It belongs to the calbindin family. Interacts with RANBP9.

In terms of biological role, buffers cytosolic calcium. May stimulate a membrane Ca(2+)-ATPase and a 3',5'-cyclic nucleotide phosphodiesterase. The protein is Calbindin (CALB1) of Homo sapiens (Human).